Here is a 141-residue protein sequence, read N- to C-terminus: Lutropin subunit beta (141 aa).

A signal peptide spans 1–18 (MGTLQGLLLWLLLGTGGA). Cystine bridges form between cysteine 29–cysteine 77, cysteine 43–cysteine 92, cysteine 46–cysteine 130, cysteine 54–cysteine 108, cysteine 58–cysteine 110, and cysteine 113–cysteine 120. N-linked (GlcNAc...) asparagine glycosylation occurs at asparagine 33.

The protein belongs to the glycoprotein hormones subunit beta family. As to quaternary structure, heterodimer of a common alpha chain and a unique beta chain which confers biological specificity to thyrotropin, lutropin, follitropin and gonadotropin.

Its subcellular location is the secreted. Its function is as follows. Promotes spermatogenesis and ovulation by stimulating the testes and ovaries to synthesize steroids. This is Lutropin subunit beta (LHB) from Oryctolagus cuniculus (Rabbit).